The primary structure comprises 171 residues: Cytochrome c oxidase subunit 5, mitochondrial (171 aa).

The transit peptide at 1–27 (MLRTPTVSALVRNVAVRAAKPTMAVRA) directs the protein to the mitochondrion. The Mitochondrial matrix portion of the chain corresponds to 28–100 (ASTMPISNPT…ALPPPGEQKK (73 aa)). A helical transmembrane segment spans residues 101 to 123 (VLAYTVAGVFLSFVIFATMRAFA). Topologically, residues 124–171 (KPPPATMTKEWQEATNEFLKAQKSDPLTGLTSEGYNGKGHVQSPSASA) are mitochondrial intermembrane. Positions 145–171 (QKSDPLTGLTSEGYNGKGHVQSPSASA) are disordered.

Belongs to the cytochrome c oxidase IV family. Component of the cytochrome c oxidase (complex IV, CIV), a multisubunit enzyme composed of 11 subunits. The complex is composed of a catalytic core of 3 subunits Cox1, Cox2 and Cox3, encoded in the mitochondrial DNA, and 8 supernumerary subunits Cox4, Cox5a/Cox5, Cox6, Cox7, Cox8, Cox7a/Cox9, Cox6b/Cox12 and Cox6a/Cox13, which are encoded in the nuclear genome. The complex exists as a monomer or a dimer and forms respiratory supercomplexes (SCs) in the inner mitochondrial membrane with NADH-ubiquinone oxidoreductase (complex I, CI) and ubiquinol-cytochrome c oxidoreductase (cytochrome b-c1 complex, complex III, CIII), resulting in various different assemblies (supercomplexes I(1)IV(1), I(1)III(3)IV(2), III(2)IV(1) and III(2)IV(2) as well as larger supercomplexes of compositions like I(1)III(2)IV(5-6)).

The protein localises to the mitochondrion inner membrane. It functions in the pathway energy metabolism; oxidative phosphorylation. Component of the cytochrome c oxidase, the last enzyme in the mitochondrial electron transport chain which drives oxidative phosphorylation. The respiratory chain contains 3 multisubunit complexes succinate dehydrogenase (complex II, CII), ubiquinol-cytochrome c oxidoreductase (cytochrome b-c1 complex, complex III, CIII) and cytochrome c oxidase (complex IV, CIV), that cooperate to transfer electrons derived from NADH and succinate to molecular oxygen, creating an electrochemical gradient over the inner membrane that drives transmembrane transport and the ATP synthase. Cytochrome c oxidase is the component of the respiratory chain that catalyzes the reduction of oxygen to water. Electrons originating from reduced cytochrome c in the intermembrane space (IMS) are transferred via the dinuclear copper A center (CU(A)) of Cox2 and heme A of Cox1 to the active site in Cox1, a binuclear center (BNC) formed by heme A3 and copper B (CU(B)). The BNC reduces molecular oxygen to 2 water molecules using 4 electrons from cytochrome c in the IMS and 4 protons from the mitochondrial matrix. This chain is Cytochrome c oxidase subunit 5, mitochondrial (cya-4), found in Neurospora crassa (strain ATCC 24698 / 74-OR23-1A / CBS 708.71 / DSM 1257 / FGSC 987).